Consider the following 201-residue polypeptide: MKALTARQQQVYDLVRDHISQTGMPPTRAEIAARLGFRSPNAAEEHLKALARKGVIEIVAGASRGIRLLLEESGLPLIGRVAAGEPLLAQEHIESHYQVDPALFKPSADFLLRVSGMSMKDVGIMDGDLLAVHKTQNVRNGQIIVARIEDEVTVKRFKQTGNKVELLAENPEFKPIEVDLREQGLTIEGLAVGVIRNGNWS.

Residues 28–48 (RAEIAARLGFRSPNAAEEHLK) constitute a DNA-binding region (H-T-H motif). Residues Ser118 and Lys155 each act as for autocatalytic cleavage activity in the active site.

Belongs to the peptidase S24 family. In terms of assembly, homodimer.

It carries out the reaction Hydrolysis of Ala-|-Gly bond in repressor LexA.. Represses a number of genes involved in the response to DNA damage (SOS response), including recA and lexA. In the presence of single-stranded DNA, RecA interacts with LexA causing an autocatalytic cleavage which disrupts the DNA-binding part of LexA, leading to derepression of the SOS regulon and eventually DNA repair. The protein is LexA repressor of Photorhabdus laumondii subsp. laumondii (strain DSM 15139 / CIP 105565 / TT01) (Photorhabdus luminescens subsp. laumondii).